Here is a 26-residue protein sequence, read N- to C-terminus: Conotoxin reg6(gamma) (26 aa).

Acidic residues predominate over residues 1-12 (RVLEPGXEDPDV). A disordered region spans residues 1–26 (RVLEPGXEDPDVGEPAGEYEHHLLEX). 4-carboxyglutamate is present on Glu-4. Residue Pro-5 is modified to 4-hydroxyproline. The residue at position 8 (Glu-8) is a 4-carboxyglutamate. Pro-10 is modified (4-hydroxyproline). Glu-14 carries the 4-carboxyglutamate modification. Pro-15 is modified (4-hydroxyproline). Residues Glu-18, Glu-20, and Glu-25 each carry the 4-carboxyglutamate modification.

Expressed by the venom duct.

The protein localises to the secreted. The polypeptide is Conotoxin reg6(gamma) (Conus regius (Crown cone)).